The following is a 705-amino-acid chain: Kinesin-like protein KIF2A (705 aa).

Residues 1 to 216 (MATANFGKIQ…LDYRPLTTAD (216 aa)) form a globular region. Residues 65–186 (DLVPDEDIEP…QELREKRAQD (122 aa)) form a disordered region. Residue S75 is modified to Phosphoserine. The residue at position 96 (T96) is a Phosphothreonine. Residue K101 is modified to N6-acetyllysine. The span at 122–139 (LPEQSSSAQQNGSVSDIS) shows a compositional bias: polar residues. Phosphoserine is present on residues S134 and S139. The segment covering 158-186 (CVKEVEKLQEKREKRRLQQQELREKRAQD) has biased composition (basic and acidic residues). The 331-residue stretch at 222–552 (RICVCVRKRP…LRYANRVKEL (331 aa)) folds into the Kinesin motor domain. 312–319 (GQTGSGKT) contributes to the ATP binding site. Residues T528 and Y545 each carry the phosphoserine modification. A coiled-coil region spans residues 659–698 (ATQLEAILEQKIDILTELRDKVKSFRAALQEEEQASKQIN).

It belongs to the TRAFAC class myosin-kinesin ATPase superfamily. Kinesin family. MCAK/KIF2 subfamily. Interacts with AURKA and PLK1. Interacts with PSRC1. Interacts with MCRS1; the interaction enhances recruitment of KIF2A to the minus ends of spindle microtubules which promotes chromosome alignment. As to expression, highest level in lung. High level in ovary, moderate levels in heart, kidney, placenta, skeletal muscle and spleen (at protein level). Pancreas and spleen express a shorter isoform (at protein level). Expressed in the flagellum of elongated spermatids and sperm in the testis lumen (at protein level). Isoform 1 expressed in neuronal cells. Isoform 2 expressed in astrocytes and fibroblasts.

The protein localises to the cytoplasm. It localises to the cytoskeleton. It is found in the microtubule organizing center. Its subcellular location is the centrosome. The protein resides in the spindle pole. The protein localises to the spindle. It localises to the lysosome. Functionally, plus end-directed microtubule-dependent motor required for normal brain development. May regulate microtubule dynamics during axonal growth. Required for normal progression through mitosis. Required for normal congress of chromosomes at the metaphase plate. Required for normal spindle dynamics during mitosis. Promotes spindle turnover. Implicated in formation of bipolar mitotic spindles. Has microtubule depolymerization activity. The chain is Kinesin-like protein KIF2A (Kif2a) from Mus musculus (Mouse).